A 424-amino-acid polypeptide reads, in one-letter code: MTQMEMARKGVVSDEMKKVAEYEGVDVEIVRQKLAEGRAVLPKNKLHRIERPMIVGEGFSVKVNANIGTSQGFSSLEEEKEKARVAIEYGADSLMVLSTWGDLREIRRAIVEMSPVPVGSVPIYDSAVRSYQMKKNVVDFSEKDFFDMVIAHAEDGIDFMTIHVGVTRRVLDRIKSSRRVLKIVSRGGAIIAGWMIKNNRENPFYEHFDELLDIAKDYDITLSLGDGMRPGAVVDASDAQQFEELFVMGELVEKAREKGVQVMLEGPGHVPLNEVEMNVRLMKKIGKGAPIFLLGPLPTDRAMGYDHIACAIGGALAGYYGADFLCYVTPSEHISLPDVEDVREGVIASKIAAIVADVARGNKKAWELEKKMALARKNFDWETMFSLSLGKDVAKKKYEERPYPDKGCSMCGPFCAIKIAEEFS.

Residues N66, M95, Y124, H163, 185-187, 226-229, and E265 contribute to the substrate site; these read SRG and DGMR. A Zn(2+)-binding site is contributed by H269. A substrate-binding site is contributed by F292. H333 is a Zn(2+) binding site. Residues C408, C411, and C415 each coordinate [4Fe-4S] cluster.

It belongs to the ThiC family. [4Fe-4S] cluster serves as cofactor.

It catalyses the reaction 5-amino-1-(5-phospho-beta-D-ribosyl)imidazole + S-adenosyl-L-methionine = 4-amino-2-methyl-5-(phosphooxymethyl)pyrimidine + CO + 5'-deoxyadenosine + formate + L-methionine + 3 H(+). It functions in the pathway cofactor biosynthesis; thiamine diphosphate biosynthesis. In terms of biological role, catalyzes the synthesis of the hydroxymethylpyrimidine phosphate (HMP-P) moiety of thiamine from aminoimidazole ribotide (AIR) in a radical S-adenosyl-L-methionine (SAM)-dependent reaction. In Thermotoga sp. (strain RQ2), this protein is Phosphomethylpyrimidine synthase.